The primary structure comprises 1045 residues: Mitotic deacetylase-associated SANT domain protein (1045 aa).

N-acetylmethionine is present on Met-1. 2 disordered regions span residues Met-1–Ser-68 and Asn-99–Tyr-159. Residues Ser-132 to Lys-146 show a composition bias toward polar residues. Lys-166 participates in a covalent cross-link: Glycyl lysine isopeptide (Lys-Gly) (interchain with G-Cter in SUMO2). Arg-193 carries the post-translational modification Asymmetric dimethylarginine. Disordered regions lie at residues Gln-228–Ala-264, Ser-276–Ser-305, Ala-330–Leu-349, His-378–Ala-397, and Leu-410–Asp-441. Residues Val-240 to Ala-264 show a composition bias toward low complexity. A compositionally biased stretch (basic and acidic residues) spans Asp-412–Ala-425. At Arg-447 the chain carries Omega-N-methylarginine. Ser-461 bears the Phosphoserine mark. The tract at residues Gln-543–Pro-563 is disordered. The segment covering Glu-549–Pro-563 has biased composition (basic and acidic residues). Residue Lys-590 forms a Glycyl lysine isopeptide (Lys-Gly) (interchain with G-Cter in SUMO1); alternate linkage. A Glycyl lysine isopeptide (Lys-Gly) (interchain with G-Cter in SUMO2); alternate cross-link involves residue Lys-590. Residue Thr-655 is modified to Phosphothreonine. Ser-661 is modified (phosphoserine). A Phosphothreonine modification is found at Thr-704. Ser-709 bears the Phosphoserine mark. Thr-715 bears the Phosphothreonine mark. The 93-residue stretch at Pro-721 to Lys-813 folds into the ELM2 domain. The region spanning Thr-828 to Lys-879 is the SANT domain. Residues Thr-887–Arg-1045 are disordered. 2 stretches are compositionally biased toward basic and acidic residues: residues Ser-894–Thr-909 and Pro-919–Gly-942. Ser-923 carries the phosphoserine modification. A compositionally biased stretch (acidic residues) spans Glu-943 to Glu-957. Residues Ala-970–Ala-980 are compositionally biased toward polar residues.

As to quaternary structure, interacts with DNTTIP1. Identified in a histone deacetylase complex that contains DNTTIP1, HDAC1 and MIDEAS; this complex assembles into a tetramer that contains four copies of each protein chain.

It localises to the nucleus. The protein is Mitotic deacetylase-associated SANT domain protein of Homo sapiens (Human).